The following is a 73-amino-acid chain: Venom peptide La1 (73 aa).

Lys73 is modified (lysine amide).

Belongs to the scorpion La1-like peptide family. Post-translationally, contains 4 disulfide bonds. As to expression, expressed by the venom gland.

The protein localises to the secreted. Functionally, not toxic to insect. The sequence is that of Venom peptide La1 from Liocheles australasiae (Dwarf wood scorpion).